We begin with the raw amino-acid sequence, 631 residues long: MBT domain-containing protein 1 (631 aa).

A disordered region spans residues 1 to 31 (MFDGYDSCSEDTSSSSSSEESEEEVAPLPSN). The segment at 45–80 (PDGKSGMATCEMCGMVGVRDAFYSKTKRFCSVSCSR) adopts an FCS-type zinc-finger fold. Positions 54, 57, 74, and 78 each coordinate Zn(2+). An N6-acetyllysine modification is found at Lys-115. MBT repeat units lie at residues 144–248 (FSWG…LVPP), 256–353 (TNWK…IGHR), 354–459 (FKRS…LTPP), and 467–563 (FKWF…LQPP). Residues 563-631 (PASQSSRESQ…SATVYIKQEP (69 aa)) are disordered. A compositionally biased stretch (low complexity) spans 564-576 (ASQSSRESQSASS). The segment covering 577–593 (KQKKKAKSQQYKGHKKM) has biased composition (basic residues).

Monomer. Component of the NuA4 histone acetyltransferase complex. Interacts with EPC1; interaction is direct and promotes recruitment of MBTD1 into the NuA4 histone acetyltransferase complex.

It is found in the nucleus. The protein localises to the chromosome. In terms of biological role, chromatin reader component of the NuA4 histone acetyltransferase complex, a multiprotein complex involved in transcriptional activation of select genes principally by acetylation of nucleosomal histones H4 and H2A. The NuA4 complex plays a direct role in repair of DNA double-strand breaks (DSBs) by promoting homologous recombination (HR). MBTD1 specifically recognizes and binds monomethylated and dimethylated 'Lys-20' on histone H4 (H4K20me1 and H4K20me2, respectively). In the NuA4 complex, MBTD1 promotes recruitment of the complex to H4K20me marks by competing with TP53BP1 for binding to H4K20me. Following recruitment to H4K20me at DNA breaks, the NuA4 complex catalyzes acetylation of 'Lys-15' on histone H2A (H2AK15), blocking the ubiquitination mark required for TP53BP1 localization at DNA breaks, thereby promoting homologous recombination (HR). The polypeptide is MBT domain-containing protein 1 (Mus musculus (Mouse)).